The primary structure comprises 382 residues: Beta-lactamase CMY-1 (382 aa).

An N-terminal signal peptide occupies residues 1–23; sequence MQQRQSILWGAVATLMWAGLAHA. Ser-88 (acyl-ester intermediate) is an active-site residue. 5 residues coordinate a beta-lactam: Ser-88, Gln-144, Tyr-174, Asn-176, and Asn-363.

Belongs to the class-C beta-lactamase family.

It carries out the reaction a beta-lactam + H2O = a substituted beta-amino acid. Inhibited by the beta-lactamase-blocking agent sulbactam. In terms of biological role, class C beta-lactamase which confers resistance to penicillins and cephalosporins. Has benzylpenicillin- and cefalotin-hydrolyzing activities. Has weak cefuroxime, cefotaxime, cefoxitin, imipenem and oxacillin-hydrolyzing activities. This Klebsiella pneumoniae protein is Beta-lactamase CMY-1.